We begin with the raw amino-acid sequence, 351 residues long: Mannonate dehydratase (351 aa).

This sequence belongs to the mannonate dehydratase family. It depends on Fe(2+) as a cofactor. Mn(2+) serves as cofactor.

It carries out the reaction D-mannonate = 2-dehydro-3-deoxy-D-gluconate + H2O. It participates in carbohydrate metabolism; pentose and glucuronate interconversion. In terms of biological role, catalyzes the dehydration of D-mannonate. The sequence is that of Mannonate dehydratase from Clostridium acetobutylicum (strain ATCC 824 / DSM 792 / JCM 1419 / IAM 19013 / LMG 5710 / NBRC 13948 / NRRL B-527 / VKM B-1787 / 2291 / W).